A 137-amino-acid polypeptide reads, in one-letter code: MPTINQLVRKPRKSKVEKSDSPALNIGYNSHRKVHTKLSAPQKRGVATRVGTMTPKKPNSALRKFARVRLSNLIEVTAYIPGIGHNLQEHSVVLIRGGRVKDLPGVRYHIVRGALDTAGVADRKQGRSKYGAKRPKG.

2 disordered regions span residues 1–21 and 36–57; these read MPTINQLVRKPRKSKVEKSDS and TKLSAPQKRGVATRVGTMTPKK. Aspartate 102 bears the 3-methylthioaspartic acid mark.

Belongs to the universal ribosomal protein uS12 family. Part of the 30S ribosomal subunit. Contacts proteins S8 and S17. May interact with IF1 in the 30S initiation complex.

In terms of biological role, with S4 and S5 plays an important role in translational accuracy. Interacts with and stabilizes bases of the 16S rRNA that are involved in tRNA selection in the A site and with the mRNA backbone. Located at the interface of the 30S and 50S subunits, it traverses the body of the 30S subunit contacting proteins on the other side and probably holding the rRNA structure together. The combined cluster of proteins S8, S12 and S17 appears to hold together the shoulder and platform of the 30S subunit. The polypeptide is Small ribosomal subunit protein uS12 (Streptococcus agalactiae serotype Ia (strain ATCC 27591 / A909 / CDC SS700)).